We begin with the raw amino-acid sequence, 258 residues long: Dihydroorotate dehydrogenase B (NAD(+)), electron transfer subunit (258 aa).

Residues 1–101 (MKKAYLTVVS…LGPLGNGYDP (101 aa)) enclose the FAD-binding FR-type domain. FAD is bound by residues 52–55 (RPIS), 69–71 (IYR), and 76–77 (GT). [2Fe-2S] cluster-binding residues include Cys-220, Cys-225, Cys-228, and Cys-243.

The protein belongs to the PyrK family. As to quaternary structure, heterotetramer of 2 PyrK and 2 PyrD type B subunits. The cofactor is [2Fe-2S] cluster. Requires FAD as cofactor.

It participates in pyrimidine metabolism; UMP biosynthesis via de novo pathway; orotate from (S)-dihydroorotate (NAD(+) route): step 1/1. In terms of biological role, responsible for channeling the electrons from the oxidation of dihydroorotate from the FMN redox center in the PyrD type B subunit to the ultimate electron acceptor NAD(+). In Bacillus pumilus (strain SAFR-032), this protein is Dihydroorotate dehydrogenase B (NAD(+)), electron transfer subunit.